Reading from the N-terminus, the 258-residue chain is Global transcriptional regulator CodY (258 aa).

The interval 1–156 (MSSLLTKTRM…SATIVGMEML (156 aa)) is GAF domain. The H-T-H motif DNA-binding region spans 204–223 (ASKIADKVGITRSVIVNALR).

Belongs to the CodY family.

The protein localises to the cytoplasm. Functionally, DNA-binding global transcriptional regulator which is involved in the adaptive response to starvation and acts by directly or indirectly controlling the expression of numerous genes in response to nutrient availability. During rapid exponential growth, CodY is highly active and represses genes whose products allow adaptation to nutrient depletion. In Clostridium beijerinckii (strain ATCC 51743 / NCIMB 8052) (Clostridium acetobutylicum), this protein is Global transcriptional regulator CodY.